The primary structure comprises 511 residues: 2'-5'-oligoadenylate synthase-like protein 1 (511 aa).

2 consecutive Ubiquitin-like domains span residues 350–429 (IQVT…ISPE) and 430–506 (IQVF…EGAA).

The protein belongs to the 2-5A synthase family. Specifically interacts with the ligand binding domain of the thyroid receptor (TR). TRIP14 does not require the presence of thyroid hormone for its interaction. Binds MBD1.

It localises to the nucleus. Its subcellular location is the nucleolus. The protein resides in the cytoplasm. Does not have 2'-5'-OAS activity, but can bind double-stranded RNA. Displays antiviral activity via an alternative antiviral pathway independent of RNase L. The polypeptide is 2'-5'-oligoadenylate synthase-like protein 1 (Oasl1) (Mus musculus (Mouse)).